The following is a 183-amino-acid chain: BLOC-1-related complex subunit 8 homolog (183 aa).

A disordered region spans residues 152-183 (MIGPGTATGRTEAQAATSSNPGELQRSYTTLH). Residues 159 to 183 (TGRTEAQAATSSNPGELQRSYTTLH) show a composition bias toward polar residues.

This sequence belongs to the BORCS8 family.

The protein resides in the lysosome membrane. In terms of biological role, may participate in the coupling of lysosomes to microtubule plus-end-directed kinesin motor. This chain is BLOC-1-related complex subunit 8 homolog, found in Drosophila melanogaster (Fruit fly).